Consider the following 252-residue polypeptide: Cysteine-rich repeat secretory protein 38 (252 aa).

The first 27 residues, 1–27, serve as a signal peptide directing secretion; sequence MSSLKRIVWFPILAIAIQILSIHTVLS. 2 consecutive Gnk2-homologous domains span residues 34-136 and 142-248; these read FLFH…STNF and FENR…IYPF.

This sequence belongs to the cysteine-rich repeat secretory protein family.

The protein localises to the secreted. The chain is Cysteine-rich repeat secretory protein 38 (CRRSP38) from Arabidopsis thaliana (Mouse-ear cress).